The chain runs to 215 residues: Glutathione S-transferase F10 (215 aa).

Residues 2–81 enclose the GST N-terminal domain; sequence VLTIYAPLFA…YIAEKYRSQG (80 aa). Residues 11 to 12, 39 to 40, 52 to 53, and 65 to 66 each bind glutathione; these read AS, QR, KI, and ES. The GST C-terminal domain maps to 88–215; it reads TIEERGQVEQ…EVSAKYSLPV (128 aa).

The protein belongs to the GST superfamily. Phi family. In terms of assembly, interacts with BAK1. In terms of tissue distribution, expressed in roots, stems, floral buds, mature flowers and leaves.

The protein resides in the cytoplasm. The protein localises to the cytosol. It catalyses the reaction RX + glutathione = an S-substituted glutathione + a halide anion + H(+). In vitro, possesses glutathione S-transferase activity toward 1-chloro-2,4-dinitrobenzene (CDNB) and benzyl isothiocyanate (BITC). May be involved in the conjugation of reduced glutathione to a wide number of exogenous and endogenous hydrophobic electrophiles and have a detoxification role against certain herbicides. This is Glutathione S-transferase F10 from Arabidopsis thaliana (Mouse-ear cress).